The following is a 262-amino-acid chain: Aconitate isomerase (262 aa).

Residues 1–22 (MFPRLPTLALGALLLASTPLLA) form the signal peptide.

As to quaternary structure, monomer.

The catalysed reaction is trans-aconitate = cis-aconitate. Activated more than 1.5 fold by Ca(2+), Mg(2+), Mn(2+), Ni(2+), Fe(2+), DDT and 1,10-phenanthroline. Strongly inhibited by Ag(+) and Hg(+). Inhibited by addition of 20% (v/v) glycerol. No effect by addition of NADH or NADPH. Involved in assimilation of trans-aconitic acid. Preference for cis-aconitic acid is 14-fold higher than for trans-aconitic acid. Not active on intermediates of tricarboxylic acid (TCA) cycle including citric acid, succinic acid, fumaric acid, and 2-oxoglutaric acid or on other dicarboxilic acids including itaconic acid, formic acid, citraconic acid or maleic acid. In Pseudomonas sp, this protein is Aconitate isomerase.